Reading from the N-terminus, the 348-residue chain is MSKQTLILLYGGRSAEREVSVLSAESVMRAVDYNAFEVKTYFITQSGDFIKTQEFIETPGDDEKLMTNDTVEASQAIKPSDIYEEDAVVFPVLHGPMGEDGSIQGFLETLKLPYVGTNVLSSSVAMDKIMTKRILEVAGVPQVAYTVYIEGEDLEAAVAETLEKLTFPVFVKPANMGSSVGISKAENESELRSAIDLALKYDSRILIEQGVVAREIEVGILGNTTVKTTDPGEVVKDVAFYDYQAKYIDNKITMDIPARVPVEVMTQMRAYAAKAFRALGGCGLARCDFFLTEDGAIYLNELNTMPGFTQWSMYPLLWENMGLSYSDLIKELVVLGQEMFDKRESHLI.

Residues 132-334 form the ATP-grasp domain; it reads KRILEVAGVP…YSDLIKELVV (203 aa). 162-217 contacts ATP; it reads LEKLTFPVFVKPANMGSSVGISKAENESELRSAIDLALKYDSRILIEQGVVAREIE. The Mg(2+) site is built by aspartate 288, glutamate 301, and asparagine 303.

This sequence belongs to the D-alanine--D-alanine ligase family. The cofactor is Mg(2+). Requires Mn(2+) as cofactor.

The protein localises to the cytoplasm. The catalysed reaction is 2 D-alanine + ATP = D-alanyl-D-alanine + ADP + phosphate + H(+). It functions in the pathway cell wall biogenesis; peptidoglycan biosynthesis. Functionally, cell wall formation. The protein is D-alanine--D-alanine ligase of Streptococcus thermophilus (strain ATCC BAA-250 / LMG 18311).